A 455-amino-acid polypeptide reads, in one-letter code: MNWFKENNIFDNKLAKKPAASKLGASPTASRPAGSPAPRRVKPLNKSELAHAAIVKRIGRGSDRLNEISASFVPPEYGFRFDEVPACSHKLEYACERDLREHFLSDNEREAMKSLLRFATNYVLGYINSKDMLTFGRAAGLKLKNELEYVQESECTMCGYKFKDNTRVWMLYVIVRHPPRAASADEEFVPSPNTPDCFEFACCDCADNYPDQLNSHQVYPGINSLHAQRLVEAGFFYQYVFPLEYKTEYFTYNDVKIVHHEGPFKIIQRLLREYKRPNEHIVSITLRTTGGVVLKEINHNVRLMRYRNIYKEPTASDDVNCFTVSSSSELMKALDSGAFDSIQGTVFAEIYGFAIQEFVTGVITFPVRPVKGNYCAVCKKNKMYYSNPVLCCSKCGFTNRYIFNGKYDDLYFHPEAVQTHATHSTHGEFVRYYNLKLHAKICRERLEEYEAQNLQ.

A disordered region spans residues 20-42 (ASKLGASPTASRPAGSPAPRRVK). The segment at 374-394 (YCAVCKKNKMYYSNPVLCCSK) adopts a C4-type zinc-finger fold.

In Orgyia pseudotsugata multicapsid polyhedrosis virus (OpMNPV), this protein is Early 53 kDa protein (ME53).